A 270-amino-acid chain; its full sequence is Putative phosphoenolpyruvate synthase regulatory protein (270 aa).

151–158 (GVSRCGKT) lines the ADP pocket.

The protein belongs to the pyruvate, phosphate/water dikinase regulatory protein family. PSRP subfamily.

It carries out the reaction [pyruvate, water dikinase] + ADP = [pyruvate, water dikinase]-phosphate + AMP + H(+). It catalyses the reaction [pyruvate, water dikinase]-phosphate + phosphate + H(+) = [pyruvate, water dikinase] + diphosphate. Functionally, bifunctional serine/threonine kinase and phosphorylase involved in the regulation of the phosphoenolpyruvate synthase (PEPS) by catalyzing its phosphorylation/dephosphorylation. In Methylobacillus flagellatus (strain ATCC 51484 / DSM 6875 / VKM B-1610 / KT), this protein is Putative phosphoenolpyruvate synthase regulatory protein.